A 147-amino-acid chain; its full sequence is Ribonuclease P protein component (147 aa).

The interval 117–147 (TRPRGQSSHRTRASREATSAHTTAVGEQPTQ) is disordered.

The protein belongs to the RnpA family. Consists of a catalytic RNA component (M1 or rnpB) and a protein subunit.

It catalyses the reaction Endonucleolytic cleavage of RNA, removing 5'-extranucleotides from tRNA precursor.. Its function is as follows. RNaseP catalyzes the removal of the 5'-leader sequence from pre-tRNA to produce the mature 5'-terminus. It can also cleave other RNA substrates such as 4.5S RNA. The protein component plays an auxiliary but essential role in vivo by binding to the 5'-leader sequence and broadening the substrate specificity of the ribozyme. The protein is Ribonuclease P protein component of Thermobifida fusca (strain YX).